The chain runs to 93 residues: Small ribosomal subunit protein uS15 (93 aa).

It belongs to the universal ribosomal protein uS15 family. In terms of assembly, part of the 30S ribosomal subunit. Forms a bridge to the 50S subunit in the 70S ribosome, contacting the 23S rRNA.

Its function is as follows. One of the primary rRNA binding proteins, it binds directly to 16S rRNA where it helps nucleate assembly of the platform of the 30S subunit by binding and bridging several RNA helices of the 16S rRNA. Forms an intersubunit bridge (bridge B4) with the 23S rRNA of the 50S subunit in the ribosome. The protein is Small ribosomal subunit protein uS15 of Anaplasma marginale (strain Florida).